A 248-amino-acid chain; its full sequence is Ribosomal RNA small subunit methyltransferase J (248 aa).

Residues 101 to 102 (RD), 117 to 118 (ER), 153 to 154 (SS), and aspartate 171 contribute to the S-adenosyl-L-methionine site.

The protein belongs to the methyltransferase superfamily. RsmJ family.

Its subcellular location is the cytoplasm. The enzyme catalyses guanosine(1516) in 16S rRNA + S-adenosyl-L-methionine = N(2)-methylguanosine(1516) in 16S rRNA + S-adenosyl-L-homocysteine + H(+). In terms of biological role, specifically methylates the guanosine in position 1516 of 16S rRNA. The protein is Ribosomal RNA small subunit methyltransferase J of Serratia proteamaculans (strain 568).